Consider the following 463-residue polypeptide: uncharacterized protein (463 aa).

This is an uncharacterized protein from Alkalihalophilus pseudofirmus (strain ATCC BAA-2126 / JCM 17055 / OF4) (Bacillus pseudofirmus).